The chain runs to 298 residues: Glutamyl-Q tRNA(Asp) synthetase (298 aa).

Residues 8–12 and Glu44 contribute to the L-glutamate site; that span reads RFAPS. The short motif at 11–21 is the 'HIGH' region element; it reads PSPTGPLHFGS. Zn(2+) contacts are provided by Cys100, Cys102, Tyr123, and Cys127. L-glutamate is bound by residues Tyr183 and Arg201. The short motif at 239 to 243 is the 'KMSKS' region element; it reads KLSKQ. Lys242 serves as a coordination point for ATP.

It belongs to the class-I aminoacyl-tRNA synthetase family. GluQ subfamily. Zn(2+) is required as a cofactor.

Catalyzes the tRNA-independent activation of glutamate in presence of ATP and the subsequent transfer of glutamate onto a tRNA(Asp). Glutamate is transferred on the 2-amino-5-(4,5-dihydroxy-2-cyclopenten-1-yl) moiety of the queuosine in the wobble position of the QUC anticodon. The sequence is that of Glutamyl-Q tRNA(Asp) synthetase from Burkholderia orbicola (strain AU 1054).